Reading from the N-terminus, the 718-residue chain is Sodium/myo-inositol cotransporter (718 aa).

The Extracellular portion of the chain corresponds to 1–9 (MRAVLEAAD). A helical transmembrane segment spans residues 10-29 (IAVVALYFILVMCIGFFAMW). Over 30–38 (KSNRSTVSG) the chain is Cytoplasmic. The helical transmembrane segment at 39–57 (YFLAGRSMTWVAIGASLFV) threads the bilayer. At 58–86 (SNIGSEHFIGLAGSGAASGFAVGAWEFNA) the chain is on the extracellular side. The chain crosses the membrane as a helical span at residues 87-110 (LLLLQLLGWVFIPIYIRSGVYTMP). The Cytoplasmic segment spans residues 111–123 (EYLSKRFGGHRIQ). The helical transmembrane segment at 124–144 (VYFAALSLLLYIFTKLSVDLY) threads the bilayer. The Extracellular portion of the chain corresponds to 145–157 (SGALFIQESLGWN). Residues 158–183 (LYVSVILLIGMTALLTVTGGLVAVIY) traverse the membrane as a helical segment. Residues 184–186 (TDT) lie on the Cytoplasmic side of the membrane. A helical transmembrane segment spans residues 187–205 (LQALLMIIGALTLMVISMV). Topologically, residues 206–303 (KIGGFEEVKR…HAKGSTLMAG (98 aa)) are extracellular. Residue Asn232 is glycosylated (N-linked (GlcNAc...) asparagine). Residues 304 to 324 (FLKLLPMFIIVVPGMISRIVF) form a helical membrane-spanning segment. Residues 325–353 (ADEIACINPEHCMQVCGSRAGCSNIAYPR) lie on the Cytoplasmic side of the membrane. A helical membrane pass occupies residues 354–376 (LVMTLVPVGLRGLMMAVMIAALM). Residues 377 to 406 (SDLDSIFNSASTIFTLDVYKLIRKSASSRE) lie on the Extracellular side of the membrane. A helical membrane pass occupies residues 407–430 (LMIVGRIFVAFMVVISIAWVPIIV). The Cytoplasmic portion of the chain corresponds to 431–443 (EMQGGQMYLYIQE). A helical transmembrane segment spans residues 444-462 (VADYLTPPVAALFLLAIFW). Residues 463–510 (KRCNEQGAFYGGMAGFVLGAVRLILAFTYRAPECDQPDNRPGFIKDIH) are Extracellular-facing. The helical transmembrane segment at 511 to 532 (YMYVATALFWITGLITVIVSLL) threads the bilayer. Topologically, residues 533 to 695 (TPPPTKDQIR…QMLEETPQVK (163 aa)) are cytoplasmic. Ser594 and Ser632 each carry phosphoserine. A helical transmembrane segment spans residues 696-716 (VILNIGLFAVCSLGIFMFVYF). The Extracellular segment spans residues 717–718 (SL).

Belongs to the sodium:solute symporter (SSF) (TC 2.A.21) family. Interacts with KCNQ2 (via the pore module). Interacts with KCNQ1; this interaction is direct. Forms coregulatory complexes with ion channels KCNQ2-KCNQ3 and KCNQ1-KCNE2. In terms of tissue distribution, highly expressed in kidney, placenta, and brain and at a lesser extent in thymus, lung, bladder, and testes. Expressed in the choroid plexus epithelium (at protein level).

The protein localises to the apical cell membrane. Its subcellular location is the basolateral cell membrane. The catalysed reaction is myo-inositol(out) + 2 Na(+)(out) = myo-inositol(in) + 2 Na(+)(in). It catalyses the reaction scyllo-inositol(out) + 2 Na(+)(out) = scyllo-inositol(in) + 2 Na(+)(in). Its function is as follows. Electrogenic Na(+)-coupled sugar symporter that actively transports myo-inositol and its stereoisomer scyllo-inositol across the plasma membrane, with a Na(+) to sugar coupling ratio of 2:1. Maintains myo-inositol concentration gradient that defines cell volume and fluid balance during osmotic stress, in particular in the fetoplacental unit and central nervous system. Forms coregulatory complexes with voltage-gated K(+) ion channels, allosterically altering ion selectivity, voltage dependence and gating kinetics of the channel. In turn, K(+) efflux through the channel forms a local electrical gradient that modulates electrogenic Na(+)-coupled myo-inositol influx through the transporter. Associates with KCNQ1-KCNE2 channel in the apical membrane of choroid plexus epithelium and regulates the myo-inositol gradient between blood and cerebrospinal fluid with an impact on neuron excitability. Associates with KCNQ2-KCNQ3 channel altering ion selectivity, increasing Na(+) and Cs(+) permeation relative to K(+) permeation. Provides myo-inositol precursor for biosynthesis of phosphoinositides such as PI(4,5)P2, thus indirectly affecting the activity of phosphoinositide-dependent ion channels and Ca(2+) signaling upon osmotic stress. Functionally, (Microbial infection) Functions as a retroviral receptor for M813 murine leukemia virus (MuLV) entry. This Mus musculus (Mouse) protein is Sodium/myo-inositol cotransporter (Slc5a3).